The primary structure comprises 255 residues: Hydroxyacylglutathione hydrolase (255 aa).

Zn(2+)-binding residues include histidine 56, histidine 58, aspartate 60, histidine 61, histidine 114, aspartate 133, and histidine 171.

Belongs to the metallo-beta-lactamase superfamily. Glyoxalase II family. As to quaternary structure, monomer. It depends on Zn(2+) as a cofactor.

The enzyme catalyses an S-(2-hydroxyacyl)glutathione + H2O = a 2-hydroxy carboxylate + glutathione + H(+). The protein operates within secondary metabolite metabolism; methylglyoxal degradation; (R)-lactate from methylglyoxal: step 2/2. Functionally, thiolesterase that catalyzes the hydrolysis of S-D-lactoyl-glutathione to form glutathione and D-lactic acid. The polypeptide is Hydroxyacylglutathione hydrolase (Ruegeria pomeroyi (strain ATCC 700808 / DSM 15171 / DSS-3) (Silicibacter pomeroyi)).